A 347-amino-acid polypeptide reads, in one-letter code: Outer membrane protein A (347 aa).

The signal sequence occupies residues 1 to 21; the sequence is MKKQALTIIFLLVSLVTGIQA. 8 consecutive transmembrane segments (beta stranded) span residues 26–36, 63–74, 78–86, 105–116, 121–129, 154–163, 168–175, and 194–202; these read HWYLGTKMGWS, APVFGLFLGYEF, FSFEIENDT, NSLQLATKLSYP, FHIYTQLGG, PNVSLGAEYI, FITRLDYT, and DVALSFGWK. The hinge-like stretch occupies residues 207-218; the sequence is NINEIFSSYIPQ. The OmpA-like domain occupies 220 to 347; that stretch reads SDKQYVALNE…RRVEIEVLSD (128 aa). Cysteine 321 and cysteine 333 are joined by a disulfide.

The protein belongs to the outer membrane OOP (TC 1.B.6) superfamily. OmpA family. In terms of assembly, monomer and homodimer.

Its subcellular location is the cell outer membrane. In terms of biological role, with TolR probably plays a role in maintaining the position of the peptidoglycan cell wall in the periplasm. Acts as a porin with low permeability that allows slow penetration of small solutes; an internal gate slows down solute passage. The polypeptide is Outer membrane protein A (Buchnera aphidicola subsp. Schizaphis graminum (strain Sg)).